The primary structure comprises 145 residues: UPF0179 protein MmarC6_0993 (145 aa).

The protein belongs to the UPF0179 family.

The chain is UPF0179 protein MmarC6_0993 from Methanococcus maripaludis (strain C6 / ATCC BAA-1332).